The following is a 497-amino-acid chain: Glycerol kinase (497 aa).

Thr-13 is a binding site for ADP. Residues Thr-13, Thr-14, and Ser-15 each contribute to the ATP site. Thr-13 lines the sn-glycerol 3-phosphate pocket. Arg-17 is an ADP binding site. Residues Arg-83, Glu-84, and Tyr-135 each contribute to the sn-glycerol 3-phosphate site. Residues Arg-83, Glu-84, and Tyr-135 each coordinate glycerol. His-231 is subject to Phosphohistidine; by HPr. Residue Asp-245 coordinates sn-glycerol 3-phosphate. Residues Asp-245 and Gln-246 each contribute to the glycerol site. The ADP site is built by Thr-267 and Gly-310. Residues Thr-267, Gly-310, Gln-314, and Gly-411 each coordinate ATP. Residues Gly-411 and Asn-415 each contribute to the ADP site.

Belongs to the FGGY kinase family. As to quaternary structure, homotetramer and homodimer (in equilibrium). Post-translationally, the phosphoenolpyruvate-dependent sugar phosphotransferase system (PTS), including enzyme I, and histidine-containing protein (HPr) are required for the phosphorylation, which leads to the activation of the enzyme.

The enzyme catalyses glycerol + ATP = sn-glycerol 3-phosphate + ADP + H(+). It participates in polyol metabolism; glycerol degradation via glycerol kinase pathway; sn-glycerol 3-phosphate from glycerol: step 1/1. With respect to regulation, activated by phosphorylation and inhibited by fructose 1,6-bisphosphate (FBP). In terms of biological role, key enzyme in the regulation of glycerol uptake and metabolism. Catalyzes the phosphorylation of glycerol to yield sn-glycerol 3-phosphate. This chain is Glycerol kinase, found in Listeria monocytogenes serotype 4a (strain HCC23).